Reading from the N-terminus, the 449-residue chain is Biotin carboxylase (449 aa).

The 445-residue stretch at 1 to 445 (MLDKIVIANR…NIHYLEKKLG (445 aa)) folds into the Biotin carboxylation domain. ATP is bound by residues Lys116, Lys159, 165 to 166 (GG), 201 to 204 (EKYL), His209, and His236. Positions 120–317 (IAAMKKAGVP…LIKEQLRIAA (198 aa)) constitute an ATP-grasp domain. Position 238 (Lys238) interacts with hydrogencarbonate. The ATP site is built by Glu276 and Glu288. Residues Glu276, Glu288, and Asn290 each contribute to the Mg(2+) site. The Mn(2+) site is built by Glu276, Glu288, and Asn290. Hydrogencarbonate contacts are provided by Arg292, Val295, and Arg338. The active site involves Arg292. A biotin-binding site is contributed by Arg338.

Acetyl-CoA carboxylase is a heterohexamer of biotin carboxyl carrier protein, biotin carboxylase and the two subunits of carboxyl transferase in a 2:2 complex. Mg(2+) serves as cofactor. Mn(2+) is required as a cofactor.

It carries out the reaction N(6)-biotinyl-L-lysyl-[protein] + hydrogencarbonate + ATP = N(6)-carboxybiotinyl-L-lysyl-[protein] + ADP + phosphate + H(+). It participates in lipid metabolism; malonyl-CoA biosynthesis; malonyl-CoA from acetyl-CoA: step 1/1. Functionally, this protein is a component of the acetyl coenzyme A carboxylase complex; first, biotin carboxylase catalyzes the carboxylation of the carrier protein and then the transcarboxylase transfers the carboxyl group to form malonyl-CoA. This chain is Biotin carboxylase (accC), found in Escherichia coli O157:H7.